The following is a 523-amino-acid chain: Lysine-specific demethylase 4D (523 aa).

The region spanning 18–60 (IMIFHPTKEEFNDFDKYIAYMESQGAHRAGLAKIIPPKEWKAR) is the JmjN domain. 2 positions are modified to polyADP-ribosyl glutamic acid: Glu-26 and Glu-27. Tyr-136 contacts 2-oxoglutarate. A JmjC domain is found at 146–312 (DENTKQWNLG…YGKMASQCSC (167 aa)). 2 residues coordinate Fe cation: His-192 and Glu-194. 2-oxoglutarate is bound by residues Asn-202 and Lys-210. Positions 238 and 244 each coordinate Zn(2+). Lys-245 serves as a coordination point for 2-oxoglutarate. Residue His-280 coordinates Fe cation. Zn(2+) is bound by residues Cys-310 and Cys-312. Residues 407–523 (RRSAVSGTAT…ASGCSWAPVP (117 aa)) are disordered. Residues 428-440 (KPSSTPSSTPGPS) are compositionally biased toward low complexity. A compositionally biased stretch (basic residues) spans 448–458 (NGRRGRGRPPQ).

It belongs to the JHDM3 histone demethylase family. Fe(2+) serves as cofactor. In terms of processing, ubiquitinated via 'Lys-63'-linked ubiquitin chains. Deubiquitinated by USP14 with the help of TRIM14 leading to stabilization.

It is found in the nucleus. It catalyses the reaction N(6),N(6),N(6)-trimethyl-L-lysyl(9)-[histone H3] + 2 2-oxoglutarate + 2 O2 = N(6)-methyl-L-lysyl(9)-[histone H3] + 2 formaldehyde + 2 succinate + 2 CO2. Histone demethylase that specifically demethylates 'Lys-9' of histone H3, thereby playing a central role in histone code. Does not demethylate histone H3 'Lys-4', H3 'Lys-27', H3 'Lys-36' nor H4 'Lys-20'. Demethylates both di- and trimethylated H3 'Lys-9' residue, while it has no activity on monomethylated residues. Demethylation of Lys residue generates formaldehyde and succinate. The chain is Lysine-specific demethylase 4D (KDM4D) from Homo sapiens (Human).